A 626-amino-acid polypeptide reads, in one-letter code: MAARSVRLAQLLLFTLLCGFVGLSAAKHLDLDGIHHHQHHLHSATTHHRRRLQRDSRAKDAVGGSTHQCDAVKSYFESIDIKSSGTYSEKGAICGGNCCNNATELELRDKAAGMFEQLLHHHTSSLRGVLETNAKQFQSHVLELAQISENMTHSLFSKVYTRMVPSSRMMIHQLYTEIMNHLIYTSNYTNSNGQLGRRGIGSVQSNLEEAVRHFFVQLFPVAYHQMVHLSKNNLGDLHEDYVNCLQHNFDEMHPFGDIPQQVQSNLGKSVHMSNVFMNALLQAAEVLSEADALYGEQLTDTCKLHLLKMHYCPNCNGHHSSSRSETKLCYGYCKNVMRGCSAEYAGLLDSPWSGVVDSLNNLVTTHILSDTGIINVIKHLQTYFSEAIMAAMHNGPELEKKVKKTCGTPSLTPYSSGEPDARPPPHKNNVKWATDPDPGMVLFLSTIDKSKEFYTTIVDNFCDEQQHSRDDHSCWSGDRFGDYTQLLINPGTDSQRYNPEVPFNAKAQTGKLNELVDKLFKIRKSIGAAAPSNSIQATHDIQNDMGEGSGGGEGQIGDDEEEYGGAHGSGDGSGDGPHTPIEESEGTTTNEVESRDSGKTSGSNPLEGTATWMLLTLVTMLFSSCS.

The N-terminal stretch at 1–26 is a signal peptide; sequence MAARSVRLAQLLLFTLLCGFVGLSAA. Over residues 41-52 the composition is skewed to basic residues; the sequence is LHSATTHHRRRL. The segment at 41-65 is disordered; sequence LHSATTHHRRRLQRDSRAKDAVGGS. Asparagine 97 carries N-linked (GlcNAc...) asparagine; atypical glycosylation. N-linked (GlcNAc...) asparagine glycosylation is found at asparagine 101, asparagine 150, and asparagine 187. A disordered region spans residues 533–607; sequence NSIQATHDIQ…GKTSGSNPLE (75 aa). 4 O-linked (Xyl...) (heparan sulfate) serine glycosylation sites follow: serine 549, serine 569, serine 573, and serine 601. Over residues 565–575 the composition is skewed to gly residues; the sequence is GAHGSGDGSGD. Residue glycine 602 is the site of GPI-anchor amidated glycine attachment. The propeptide at 603 to 626 is removed in mature form; sequence SNPLEGTATWMLLTLVTMLFSSCS.

The protein belongs to the glypican family. As to quaternary structure, interacts with nord; the interaction promotes dally degradation. Interacts with Magu. As part of the dally/ Magu complex, associates with fwe (isoforms ubi, LoseA and LoseB) and is unable to interact with fwe independently of Magu.

Its subcellular location is the cell membrane. Its function is as follows. Cell surface proteoglycan that bears heparan sulfate. Functions as a coreceptor for growth factors and morphogens, such as the products of dpp, to regulate signaling and distribution of these ligands. Required for cell division patterning during postembryonic development of the nervous system. Plays a role in dpp/BMP signaling possibly by stabilizing dpp and thereby creating a morphological gradient during wing development. Might have a role in testis development. Functions with magu and fwe in a mechanism of scaling, which utilises apoptosis to ensure that the dpp patterning gradient remains proportional to the size of the growing wing. In this mechanism, fwe represses dally and Magu-dependent activity in expanding the gradient, and dally/Magu inhibits fwe-dependent apoptosis to keep cell death rate low. When the levels of these different proteins are optimally regulated the gradient correctly scales with organ growth but when this fails, fwe-mediated apoptosis is activated to trim the developing tissue to match the correct size of the gradient. In Drosophila melanogaster (Fruit fly), this protein is Division abnormally delayed protein (dally).